The primary structure comprises 457 residues: UDP-N-acetylmuramate--L-alanyl-gamma-D-glutamyl-meso-2,6-diaminoheptandioate ligase (457 aa).

110-116 (GTHGKTT) lines the ATP pocket.

The protein belongs to the MurCDEF family. Mpl subfamily. Mg(2+) serves as cofactor.

It is found in the secreted. The enzyme catalyses UDP-N-acetyl-alpha-D-muramate + L-alanyl-gamma-D-glutamyl-meso-2,6-diaminopimelate + ATP = UDP-N-acetyl-alpha-D-muramoyl-L-alanyl-gamma-D-glutamyl-meso-2,6-diaminopimelate + ADP + phosphate + H(+). It participates in cell wall biogenesis; peptidoglycan recycling. In terms of biological role, reutilizes the intact tripeptide L-alanyl-gamma-D-glutamyl-meso-diaminopimelate by linking it to UDP-N-acetylmuramate. The enzyme can also use the tetrapeptide L-alanyl-gamma-D-glutamyl-meso-2,6-diaminoheptanedioyl-D-alanine or the pentapeptide L-alanyl-gamma-D-glutamyl-meso-2,6-diaminoheptandioyl-D-alanyl-D-alanine in vivo and in vitro. This is UDP-N-acetylmuramate--L-alanyl-gamma-D-glutamyl-meso-2,6-diaminoheptandioate ligase from Escherichia coli (strain K12).